The following is a 447-amino-acid chain: Glutamate--tRNA ligase 1 (447 aa).

The 'HIGH' region signature appears at 10–20 (PSPTGMLHVGN). The 'KMSKS' region motif lies at 240-244 (KISKR). Lysine 243 is a binding site for ATP.

Belongs to the class-I aminoacyl-tRNA synthetase family. Glutamate--tRNA ligase type 1 subfamily. As to quaternary structure, monomer.

It is found in the cytoplasm. It carries out the reaction tRNA(Glu) + L-glutamate + ATP = L-glutamyl-tRNA(Glu) + AMP + diphosphate. Catalyzes the attachment of glutamate to tRNA(Glu) in a two-step reaction: glutamate is first activated by ATP to form Glu-AMP and then transferred to the acceptor end of tRNA(Glu). The sequence is that of Glutamate--tRNA ligase 1 from Rickettsia massiliae (strain Mtu5).